The primary structure comprises 501 residues: ATP synthase subunit alpha, chloroplastic (501 aa).

Residue 170 to 177 (GDRQTGKT) coordinates ATP.

Belongs to the ATPase alpha/beta chains family. In terms of assembly, F-type ATPases have 2 components, CF(1) - the catalytic core - and CF(0) - the membrane proton channel. CF(1) has five subunits: alpha(3), beta(3), gamma(1), delta(1), epsilon(1). CF(0) has four main subunits: a, b, b' and c.

It localises to the plastid. The protein resides in the chloroplast thylakoid membrane. The catalysed reaction is ATP + H2O + 4 H(+)(in) = ADP + phosphate + 5 H(+)(out). Its function is as follows. Produces ATP from ADP in the presence of a proton gradient across the membrane. The alpha chain is a regulatory subunit. The chain is ATP synthase subunit alpha, chloroplastic from Pisum sativum (Garden pea).